We begin with the raw amino-acid sequence, 190 residues long: Somatotropin (190 aa).

Residue histidine 19 coordinates Zn(2+). Cysteine 52 and cysteine 163 form a disulfide bridge. Residue glutamate 172 coordinates Zn(2+). Cysteine 180 and cysteine 188 form a disulfide bridge.

This sequence belongs to the somatotropin/prolactin family.

It is found in the secreted. Functionally, growth hormone plays an important role in growth control and involved in the regulation of several anabolic processes. The polypeptide is Somatotropin (GH) (Crocodylus novaeguineae (Crocodile)).